The sequence spans 273 residues: SPRY domain-containing SOCS box protein 4 (273 aa).

A disordered region spans residues 1–34 (MGQKLSGSLKSVEVREPALRPAKRELRGAEPGRP). Residues 12–34 (VEVREPALRPAKRELRGAEPGRP) are compositionally biased toward basic and acidic residues. The B30.2/SPRY domain maps to 34–233 (PARLDQLLDM…MRYINGLDPE (200 aa)). Residues 234-273 (PLPLMDLCRRSIRSALGRQRLQDISSLPLPQSLKNYLQYQ) form the SOCS box domain.

This sequence belongs to the SPSB family. Component of the probable ECS(SPSB4) E3 ubiquitin-protein ligase complex which contains CUL5, RNF7/RBX2, Elongin BC complex and SPSB4. Interacts with CUL5; RNF7; ELOB and ELOC. Interacts with MET. Interacts (via B30.2/SPRY domain) with PAWR; this interaction occurs in association with the Elongin BC complex. Interacts with NOS2. Interacts with EPHB2.

It localises to the cytoplasm. The protein resides in the cytosol. Its pathway is protein modification; protein ubiquitination. In terms of biological role, substrate recognition component of a SCF-like ECS (Elongin BC-CUL2/5-SOCS-box protein) E3 ubiquitin-protein ligase complex which mediates the ubiquitination and subsequent proteasomal degradation of target proteins. Negatively regulates nitric oxide (NO) production and limits cellular toxicity in activated macrophages by mediating the ubiquitination and proteasomal degradation of NOS2. Acts as a bridge which links NOS2 with the ECS E3 ubiquitin ligase complex components ELOC and CUL5. Diminishes EphB2-dependent cell repulsive responses by mediating the ubiquitination and degradation of EphB2/CTF2. Regulates cellular clock function by mediating the ubiquitin/proteasome-dependent degradation of the circadian transcriptional repressor NR1D1. The chain is SPRY domain-containing SOCS box protein 4 (SPSB4) from Homo sapiens (Human).